The chain runs to 148 residues: Large ribosomal subunit protein bL9 (148 aa).

It belongs to the bacterial ribosomal protein bL9 family.

In terms of biological role, binds to the 23S rRNA. The chain is Large ribosomal subunit protein bL9 from Pseudomonas syringae pv. tomato (strain ATCC BAA-871 / DC3000).